We begin with the raw amino-acid sequence, 167 residues long: NAD(P)H-quinone oxidoreductase subunit I, chloroplastic (167 aa).

4Fe-4S ferredoxin-type domains follow at residues glycine 55–lysine 84 and leucine 95–glutamate 124. [4Fe-4S] cluster contacts are provided by cysteine 64, cysteine 67, cysteine 70, cysteine 74, cysteine 104, cysteine 107, cysteine 110, and cysteine 114.

Belongs to the complex I 23 kDa subunit family. As to quaternary structure, NDH is composed of at least 16 different subunits, 5 of which are encoded in the nucleus. Requires [4Fe-4S] cluster as cofactor.

It localises to the plastid. It is found in the chloroplast thylakoid membrane. The catalysed reaction is a plastoquinone + NADH + (n+1) H(+)(in) = a plastoquinol + NAD(+) + n H(+)(out). The enzyme catalyses a plastoquinone + NADPH + (n+1) H(+)(in) = a plastoquinol + NADP(+) + n H(+)(out). Its function is as follows. NDH shuttles electrons from NAD(P)H:plastoquinone, via FMN and iron-sulfur (Fe-S) centers, to quinones in the photosynthetic chain and possibly in a chloroplast respiratory chain. The immediate electron acceptor for the enzyme in this species is believed to be plastoquinone. Couples the redox reaction to proton translocation, and thus conserves the redox energy in a proton gradient. The polypeptide is NAD(P)H-quinone oxidoreductase subunit I, chloroplastic (Lepidium virginicum (Virginia pepperweed)).